Consider the following 339-residue polypeptide: Phenylalanine--tRNA ligase alpha subunit (339 aa).

Residue glutamate 254 coordinates Mg(2+).

Belongs to the class-II aminoacyl-tRNA synthetase family. Phe-tRNA synthetase alpha subunit type 1 subfamily. Tetramer of two alpha and two beta subunits. Mg(2+) serves as cofactor.

It localises to the cytoplasm. The catalysed reaction is tRNA(Phe) + L-phenylalanine + ATP = L-phenylalanyl-tRNA(Phe) + AMP + diphosphate + H(+). This is Phenylalanine--tRNA ligase alpha subunit from Clostridium tetani (strain Massachusetts / E88).